A 304-amino-acid polypeptide reads, in one-letter code: Glutaminase (304 aa).

Residues Ser63, Asn114, Glu158, Asn165, Tyr189, Tyr240, and Val258 each coordinate substrate.

It belongs to the glutaminase family. Homotetramer.

It catalyses the reaction L-glutamine + H2O = L-glutamate + NH4(+). This Shewanella baltica (strain OS185) protein is Glutaminase.